Consider the following 547-residue polypeptide: Chaperonin GroEL (547 aa).

ATP contacts are provided by residues 29 to 32, 86 to 90, glycine 413, 479 to 481, and aspartate 495; these read TLGP, DGTTT, and NAA.

Belongs to the chaperonin (HSP60) family. In terms of assembly, forms a cylinder of 14 subunits composed of two heptameric rings stacked back-to-back. Interacts with the co-chaperonin GroES.

It is found in the cytoplasm. It catalyses the reaction ATP + H2O + a folded polypeptide = ADP + phosphate + an unfolded polypeptide.. Its function is as follows. Together with its co-chaperonin GroES, plays an essential role in assisting protein folding. The GroEL-GroES system forms a nano-cage that allows encapsulation of the non-native substrate proteins and provides a physical environment optimized to promote and accelerate protein folding. The chain is Chaperonin GroEL from Synechococcus sp. (strain RCC307).